The primary structure comprises 884 residues: Lon protease homolog 2, peroxisomal (884 aa).

Residues 12–255 form the Lon N-terminal domain; that stretch reads LAILPFRNKV…KATELVDRHL (244 aa). A disordered region spans residues 67 to 101; that stretch reads SLLSPGVGSDSGEGGSKAPGGSAGESTKQDTKNGK. Positions 75–89 are enriched in gly residues; the sequence is SDSGEGGSKAPGGSA. An ATP-binding site is contributed by 408 to 415; that stretch reads GPPGVGKT. Positions 689-874 constitute a Lon proteolytic domain; it reads VASPGVSVGL…EEVLDHAFEG (186 aa). Active-site residues include S780 and K823. A Microbody targeting signal motif is present at residues 882 to 884; the sequence is SKL.

This sequence belongs to the peptidase S16 family.

It is found in the peroxisome matrix. It carries out the reaction Hydrolysis of proteins in presence of ATP.. In terms of biological role, ATP-dependent serine protease that mediates the selective degradation of misfolded and unassembled polypeptides in the peroxisomal matrix. Necessary for type 2 peroxisome targeting signal (PTS2)-containing protein processing and facilitates peroxisome matrix protein import. This is Lon protease homolog 2, peroxisomal from Oryza sativa subsp. japonica (Rice).